A 772-amino-acid chain; its full sequence is Alpha-xylosidase (772 aa).

Catalysis depends on D416, which acts as the Nucleophile. The active site involves E419. D482 functions as the Proton donor in the catalytic mechanism.

The protein belongs to the glycosyl hydrolase 31 family. Homohexamer.

It catalyses the reaction Hydrolysis of terminal, non-reducing alpha-D-xylose residues with release of alpha-D-xylose.. Functionally, can catalyze the transfer of alpha-xylosyl residue from alpha-xyloside to xylose, glucose, mannose, fructose, maltose, isomaltose, nigerose, kojibiose, sucrose and trehalose. The protein is Alpha-xylosidase (yicI) of Escherichia coli (strain K12).